Reading from the N-terminus, the 130-residue chain is Small ribosomal subunit protein uS8 (130 aa).

Belongs to the universal ribosomal protein uS8 family. As to quaternary structure, part of the 30S ribosomal subunit. Contacts proteins S5 and S12.

Functionally, one of the primary rRNA binding proteins, it binds directly to 16S rRNA central domain where it helps coordinate assembly of the platform of the 30S subunit. The protein is Small ribosomal subunit protein uS8 of Idiomarina loihiensis (strain ATCC BAA-735 / DSM 15497 / L2-TR).